The sequence spans 151 residues: UPF0178 protein YaiI (151 aa).

This sequence belongs to the UPF0178 family.

This chain is UPF0178 protein YaiI, found in Salmonella choleraesuis (strain SC-B67).